A 263-amino-acid chain; its full sequence is Small ribosomal subunit protein uS2 (263 aa).

It belongs to the universal ribosomal protein uS2 family. Component of the small ribosomal subunit. Mature ribosomes consist of a small (40S) and a large (60S) subunit. The 40S subunit contains about 33 different proteins and 1 molecule of RNA (18S). The 60S subunit contains about 49 different proteins and 3 molecules of RNA (25S, 5.8S and 5S). Interacts with RPS21.

It localises to the cytoplasm. Functionally, required for the assembly and/or stability of the 40S ribosomal subunit. Required for the processing of the 20S rRNA-precursor to mature 18S rRNA in a late step of the maturation of 40S ribosomal subunits. The polypeptide is Small ribosomal subunit protein uS2 (Vairimorpha ceranae (strain BRL01) (Microsporidian parasite)).